Here is a 403-residue protein sequence, read N- to C-terminus: Dual-specificity RNA methyltransferase RlmN (403 aa).

Glutamate 126 serves as the catalytic Proton acceptor. Positions 132–375 constitute a Radical SAM core domain; that stretch reads ETDRGTLCVS…VRTPRGRDIL (244 aa). Residues cysteine 139 and cysteine 378 are joined by a disulfide bond. [4Fe-4S] cluster contacts are provided by cysteine 146, cysteine 150, and cysteine 153. S-adenosyl-L-methionine-binding positions include 204–205, serine 236, 258–260, and asparagine 335; these read GE and SLH. Residue cysteine 378 is the S-methylcysteine intermediate of the active site.

The protein belongs to the radical SAM superfamily. RlmN family. It depends on [4Fe-4S] cluster as a cofactor.

The protein resides in the cytoplasm. It carries out the reaction adenosine(2503) in 23S rRNA + 2 reduced [2Fe-2S]-[ferredoxin] + 2 S-adenosyl-L-methionine = 2-methyladenosine(2503) in 23S rRNA + 5'-deoxyadenosine + L-methionine + 2 oxidized [2Fe-2S]-[ferredoxin] + S-adenosyl-L-homocysteine. It catalyses the reaction adenosine(37) in tRNA + 2 reduced [2Fe-2S]-[ferredoxin] + 2 S-adenosyl-L-methionine = 2-methyladenosine(37) in tRNA + 5'-deoxyadenosine + L-methionine + 2 oxidized [2Fe-2S]-[ferredoxin] + S-adenosyl-L-homocysteine. Specifically methylates position 2 of adenine 2503 in 23S rRNA and position 2 of adenine 37 in tRNAs. m2A2503 modification seems to play a crucial role in the proofreading step occurring at the peptidyl transferase center and thus would serve to optimize ribosomal fidelity. The protein is Dual-specificity RNA methyltransferase RlmN of Bradyrhizobium sp. (strain ORS 278).